A 329-amino-acid chain; its full sequence is Beta-ribofuranosylphenol 5'-phosphate synthase (329 aa).

Belongs to the beta-RFA-P synthase family. As to quaternary structure, homodimer. Mg(2+) serves as cofactor.

The catalysed reaction is 5-phospho-alpha-D-ribose 1-diphosphate + 4-hydroxybenzoate + H(+) = 4-(beta-D-ribofuranosyl)phenol 5'-phosphate + CO2 + diphosphate. It carries out the reaction 4-aminobenzoate + 5-phospho-alpha-D-ribose 1-diphosphate + H(+) = 4-(beta-D-ribofuranosyl)aminobenzene 5'-phosphate + CO2 + diphosphate. It participates in cofactor biosynthesis; 5,6,7,8-tetrahydromethanopterin biosynthesis. Catalyzes the condensation of 4-hydroxybenzoate (HB) with 5-phospho-alpha-D-ribose 1-diphosphate (PRPP) to produce beta-ribofuranosylphenol 5'-phosphate (beta-RFH-P). Also catalyzes the condensation of 4-aminobenzoate (pABA) with PRPP to produce beta-ribofuranosylaminobenzene 5'-phosphate (beta-RFA-P). Only 4-hydroxybenzoate is known to be biosynthesized by methanogenic archaea, but 4-aminobenzoate can be used as substrate by growing methanogens when it is present in the growth medium. In Methanothermobacter thermautotrophicus (strain ATCC 29096 / DSM 1053 / JCM 10044 / NBRC 100330 / Delta H) (Methanobacterium thermoautotrophicum), this protein is Beta-ribofuranosylphenol 5'-phosphate synthase.